We begin with the raw amino-acid sequence, 290 residues long: 4-hydroxy-3-methylbut-2-enyl diphosphate reductase (290 aa).

Residue Cys-12 participates in [4Fe-4S] cluster binding. 2 residues coordinate (2E)-4-hydroxy-3-methylbut-2-enyl diphosphate: His-50 and His-83. 2 residues coordinate dimethylallyl diphosphate: His-50 and His-83. 2 residues coordinate isopentenyl diphosphate: His-50 and His-83. Cys-105 is a [4Fe-4S] cluster binding site. Residue His-133 participates in (2E)-4-hydroxy-3-methylbut-2-enyl diphosphate binding. His-133 contacts dimethylallyl diphosphate. Residue His-133 participates in isopentenyl diphosphate binding. Glu-135 (proton donor) is an active-site residue. Thr-173 is a binding site for (2E)-4-hydroxy-3-methylbut-2-enyl diphosphate. A [4Fe-4S] cluster-binding site is contributed by Cys-202. (2E)-4-hydroxy-3-methylbut-2-enyl diphosphate-binding residues include Ser-230, Asn-232, and Ser-274. 3 residues coordinate dimethylallyl diphosphate: Ser-230, Asn-232, and Ser-274. The isopentenyl diphosphate site is built by Ser-230, Asn-232, and Ser-274.

This sequence belongs to the IspH family. [4Fe-4S] cluster serves as cofactor.

It catalyses the reaction isopentenyl diphosphate + 2 oxidized [2Fe-2S]-[ferredoxin] + H2O = (2E)-4-hydroxy-3-methylbut-2-enyl diphosphate + 2 reduced [2Fe-2S]-[ferredoxin] + 2 H(+). The catalysed reaction is dimethylallyl diphosphate + 2 oxidized [2Fe-2S]-[ferredoxin] + H2O = (2E)-4-hydroxy-3-methylbut-2-enyl diphosphate + 2 reduced [2Fe-2S]-[ferredoxin] + 2 H(+). It participates in isoprenoid biosynthesis; dimethylallyl diphosphate biosynthesis; dimethylallyl diphosphate from (2E)-4-hydroxy-3-methylbutenyl diphosphate: step 1/1. Its pathway is isoprenoid biosynthesis; isopentenyl diphosphate biosynthesis via DXP pathway; isopentenyl diphosphate from 1-deoxy-D-xylulose 5-phosphate: step 6/6. Catalyzes the conversion of 1-hydroxy-2-methyl-2-(E)-butenyl 4-diphosphate (HMBPP) into a mixture of isopentenyl diphosphate (IPP) and dimethylallyl diphosphate (DMAPP). Acts in the terminal step of the DOXP/MEP pathway for isoprenoid precursor biosynthesis. This Nitratidesulfovibrio vulgaris (strain ATCC 29579 / DSM 644 / CCUG 34227 / NCIMB 8303 / VKM B-1760 / Hildenborough) (Desulfovibrio vulgaris) protein is 4-hydroxy-3-methylbut-2-enyl diphosphate reductase.